The sequence spans 319 residues: Lipoyl synthase (319 aa).

[4Fe-4S] cluster is bound by residues C61, C66, C72, C87, C91, C94, and S300. Positions 73 to 289 constitute a Radical SAM core domain; the sequence is WDKKHATFMI…ESVAYSKGFL (217 aa).

Belongs to the radical SAM superfamily. Lipoyl synthase family. Requires [4Fe-4S] cluster as cofactor.

The protein localises to the cytoplasm. It catalyses the reaction [[Fe-S] cluster scaffold protein carrying a second [4Fe-4S](2+) cluster] + N(6)-octanoyl-L-lysyl-[protein] + 2 oxidized [2Fe-2S]-[ferredoxin] + 2 S-adenosyl-L-methionine + 4 H(+) = [[Fe-S] cluster scaffold protein] + N(6)-[(R)-dihydrolipoyl]-L-lysyl-[protein] + 4 Fe(3+) + 2 hydrogen sulfide + 2 5'-deoxyadenosine + 2 L-methionine + 2 reduced [2Fe-2S]-[ferredoxin]. It functions in the pathway protein modification; protein lipoylation via endogenous pathway; protein N(6)-(lipoyl)lysine from octanoyl-[acyl-carrier-protein]: step 2/2. Its function is as follows. Catalyzes the radical-mediated insertion of two sulfur atoms into the C-6 and C-8 positions of the octanoyl moiety bound to the lipoyl domains of lipoate-dependent enzymes, thereby converting the octanoylated domains into lipoylated derivatives. The chain is Lipoyl synthase from Rhodopseudomonas palustris (strain BisB18).